Consider the following 520-residue polypeptide: Anthranilate synthase component 1 (520 aa).

Residues Ser40 and 291–293 contribute to the L-tryptophan site; that span reads PYM. Chorismate is bound at residue 328-329; the sequence is GT. Glu361 provides a ligand contact to Mg(2+). Residues Tyr449, Arg469, 483–485, and Gly485 contribute to the chorismate site; that span reads GAG. Glu498 is a Mg(2+) binding site.

Belongs to the anthranilate synthase component I family. Heterotetramer consisting of two non-identical subunits: a beta subunit (TrpG) and a large alpha subunit (TrpE). Mg(2+) is required as a cofactor.

The catalysed reaction is chorismate + L-glutamine = anthranilate + pyruvate + L-glutamate + H(+). The protein operates within amino-acid biosynthesis; L-tryptophan biosynthesis; L-tryptophan from chorismate: step 1/5. Its activity is regulated as follows. Feedback inhibited by tryptophan. Its function is as follows. Part of a heterotetrameric complex that catalyzes the two-step biosynthesis of anthranilate, an intermediate in the biosynthesis of L-tryptophan. In the first step, the glutamine-binding beta subunit (TrpG) of anthranilate synthase (AS) provides the glutamine amidotransferase activity which generates ammonia as a substrate that, along with chorismate, is used in the second step, catalyzed by the large alpha subunit of AS (TrpE) to produce anthranilate. In the absence of TrpG, TrpE can synthesize anthranilate directly from chorismate and high concentrations of ammonia. This is Anthranilate synthase component 1 (trpE) from Buchnera aphidicola subsp. Pemphigus spyrothecae.